The following is an 803-amino-acid chain: MKGSDATLLSFQLLDVSYEMRGSTPVIILWGRGADGSRVVVFYGEFRPYFYVLPDGSVGLDQLAAMIRRLSRPSSPILSVERVRRRFIGREVEALKVTTLVPASVREYREAVRRLGGVRDVLEADIPFALRFIIDFNLYPMRWYVAEVREVAVPHGYSVDRAYTLSGDIREDETRIQEDPLKGLRVMAFDIEVYSKMRTPDPKKDPVIMIGLQQAGGEIEILEAEDRSDKKVIAGFVERVKSIDPDVIVGYNQNRFDWPYLVERARVLGVKLAVGRRSVEPQPGLYGHYSVSGRLNVDLLDFAEELHEVKVKTLEEVADYLGVVKIGERVTLEWWQIGEYWDDPSKREILRKYLRDDVRSTMGLAEKFLPFGAELSQVSGLPLDQVMAASVGFRLEWRLIREAAKLGELVPNRVERSEGRYAGAIVLRPKPGVHEDIAVLDFASMYPNIMVKYNVGPDTLVRPGEEYGEEEVYTAPEVGHKFRKSPPGFFKKILERFLSWRRQIRSEMKKHPPDSPEYKLLDERQKAIKLLANASYGYMGWPHARWYCRECAEAVTAWGRSIIRTAIRKAGELGLEVIYGDTDSLFVKNDPEKVERLIRFVEEELGFDIKVDKVYRRVFFTEAKKRYVGLTVDGKIDVVGFEAVRGDWSELAKETQFKVAEIVLKTGSVDEAVDYVRNIIEKLRRGQVDMRKLVIWKTLTRPPSMYEARQPHVTAALLMERAGIKVEPGAKIGYVVTKGSGPLYTRAKPYFMASKEEVDVEYYVDKQVVPAALRILQYFGVTEKRLKGGGRQSTLLDFMRRGK.

The protein belongs to the DNA polymerase type-B family.

It carries out the reaction DNA(n) + a 2'-deoxyribonucleoside 5'-triphosphate = DNA(n+1) + diphosphate. This chain is DNA polymerase 2 (polB), found in Aeropyrum pernix (strain ATCC 700893 / DSM 11879 / JCM 9820 / NBRC 100138 / K1).